Here is a 599-residue protein sequence, read N- to C-terminus: Elongation factor 4 (599 aa).

Residues 2 to 184 enclose the tr-type G domain; it reads KNIRNFSIIA…RLVRDIPPPE (183 aa). Residues 14 to 19 and 131 to 134 contribute to the GTP site; these read DHGKST and NKID.

It belongs to the TRAFAC class translation factor GTPase superfamily. Classic translation factor GTPase family. LepA subfamily.

Its subcellular location is the cell inner membrane. It carries out the reaction GTP + H2O = GDP + phosphate + H(+). Required for accurate and efficient protein synthesis under certain stress conditions. May act as a fidelity factor of the translation reaction, by catalyzing a one-codon backward translocation of tRNAs on improperly translocated ribosomes. Back-translocation proceeds from a post-translocation (POST) complex to a pre-translocation (PRE) complex, thus giving elongation factor G a second chance to translocate the tRNAs correctly. Binds to ribosomes in a GTP-dependent manner. This chain is Elongation factor 4, found in Cronobacter sakazakii (strain ATCC BAA-894) (Enterobacter sakazakii).